The sequence spans 150 residues: Snake venom vascular endothelial growth factor toxin barietin (150 aa).

The N-terminal stretch at 1-24 (MAAYLLAVAILFCIQGWPSGTVQG) is a signal peptide. E25 is subject to Pyrrolidone carboxylic acid (Glu). 3 cysteine pairs are disulfide-bonded: C38/C80, C69/C115, and C73/C117. A disordered region spans residues 119–150 (PRSGSRVNIGKHKRSPEEGEREPSSPLTPGSL). Residues 122 to 150 (GSRVNIGKHKRSPEEGEREPSSPLTPGSL) constitute a propeptide that is removed on maturation.

Belongs to the PDGF/VEGF growth factor family. Snake venom VEGF subfamily. Homodimer; disulfide-linked. Interacts with high affinity with VEGF receptor-2 (KDR), and with a lower affinity with VEGF receptor-1 (FLT1). Does not bind VEGF receptor-3 (FLT4) and neuropilin-1 (NRP1). As to expression, expressed by the venom gland.

It localises to the secreted. Snake venom VEGFs that may contribute to venom dispersion and prey subjugation by inducing vascular permeability and hypotension. This protein induces an increase in capillary permeability after intradermal injection, as well as a drastic hypotensive effect after intravenous injection. The hypotension is mediated by nitric oxide (NO), which is produced by VEGF-activated endothelium NO synthase. Also induces angiogenesis in vitro, probably through VEGF receptor (KDR/VEGFR-2) signaling. The chain is Snake venom vascular endothelial growth factor toxin barietin from Bitis arietans (African puff adder).